A 137-amino-acid chain; its full sequence is Protein apnoia (137 aa).

The next 3 membrane-spanning stretches (helical) occupy residues 7 to 27, 55 to 75, and 76 to 96; these read IVFA…QQQA, LVPG…LTVV, and SIKG…QMLS.

In terms of assembly, interacts with crb.

It is found in the apical cell membrane. In terms of biological role, transmembrane protein that plays a key role in trachea development by regulating crb localization and maintenance at the apical cell membrane. Required for anisotropic apical surface expansion important for tracheal tube elongation and lumen stability at larval stages. In Drosophila melanogaster (Fruit fly), this protein is Protein apnoia.